Here is a 367-residue protein sequence, read N- to C-terminus: Probable 7-methylxanthine methyltransferase 2 (367 aa).

Residue Tyr20 coordinates S-adenosyl-L-homocysteine. A theobromine-binding site is contributed by Thr27. Positions 64, 69, 101, 102, 134, and 135 each coordinate S-adenosyl-L-homocysteine. Theobromine-binding residues include Tyr152, His155, and Trp156. Residues Asn172, Asp258, Phe260, and Asn261 each contribute to the Mg(2+) site. Residue Phe313 coordinates theobromine.

The protein belongs to the methyltransferase superfamily. Type-7 methyltransferase family. Mg(2+) is required as a cofactor.

It catalyses the reaction 7-methylxanthine + S-adenosyl-L-methionine = theobromine + S-adenosyl-L-homocysteine + H(+). The protein operates within alkaloid biosynthesis. Its function is as follows. Involved in the biosynthesis of theobromine. The polypeptide is Probable 7-methylxanthine methyltransferase 2 (Theobroma cacao (Cacao)).